A 236-amino-acid chain; its full sequence is Ubiquinone biosynthesis O-methyltransferase (236 aa).

Residues R39, G59, D80, and M124 each coordinate S-adenosyl-L-methionine.

The protein belongs to the methyltransferase superfamily. UbiG/COQ3 family.

The catalysed reaction is a 3-demethylubiquinol + S-adenosyl-L-methionine = a ubiquinol + S-adenosyl-L-homocysteine + H(+). It carries out the reaction a 3-(all-trans-polyprenyl)benzene-1,2-diol + S-adenosyl-L-methionine = a 2-methoxy-6-(all-trans-polyprenyl)phenol + S-adenosyl-L-homocysteine + H(+). The protein operates within cofactor biosynthesis; ubiquinone biosynthesis. In terms of biological role, O-methyltransferase that catalyzes the 2 O-methylation steps in the ubiquinone biosynthetic pathway. The chain is Ubiquinone biosynthesis O-methyltransferase from Shewanella sp. (strain MR-7).